Consider the following 174-residue polypeptide: Pectinesterase inhibitor 12 (174 aa).

An N-terminal signal peptide occupies residues 1–20 (MKFLVSLVIFSLFLNGFATA). 2 cysteine pairs are disulfide-bonded: Cys28-Cys43 and Cys100-Cys140. A glycan (N-linked (GlcNAc...) asparagine) is linked at Asn129.

The protein belongs to the PMEI family.

The protein localises to the secreted. Its subcellular location is the extracellular space. The protein resides in the apoplast. Functionally, pectin methylesterase (PME) inhibitor involved in the maintenance of cell wall integrity in response to necrotrophic pathogens. Modulates PME activity and pectin methylesterification during infection by Botrytis cinerea and contributes to resistance against the pathogen. The sequence is that of Pectinesterase inhibitor 12 from Arabidopsis thaliana (Mouse-ear cress).